The chain runs to 437 residues: Methylenetetrahydrofolate--tRNA-(uracil-5-)-methyltransferase TrmFO (437 aa).

8 to 13 provides a ligand contact to FAD; it reads GAGLAG.

The protein belongs to the MnmG family. TrmFO subfamily. Requires FAD as cofactor.

It is found in the cytoplasm. It carries out the reaction uridine(54) in tRNA + (6R)-5,10-methylene-5,6,7,8-tetrahydrofolate + NADH + H(+) = 5-methyluridine(54) in tRNA + (6S)-5,6,7,8-tetrahydrofolate + NAD(+). It catalyses the reaction uridine(54) in tRNA + (6R)-5,10-methylene-5,6,7,8-tetrahydrofolate + NADPH + H(+) = 5-methyluridine(54) in tRNA + (6S)-5,6,7,8-tetrahydrofolate + NADP(+). In terms of biological role, catalyzes the folate-dependent formation of 5-methyl-uridine at position 54 (M-5-U54) in all tRNAs. The sequence is that of Methylenetetrahydrofolate--tRNA-(uracil-5-)-methyltransferase TrmFO from Desulfitobacterium hafniense (strain Y51).